We begin with the raw amino-acid sequence, 346 residues long: Annexin A1 (346 aa).

An N-acetylalanine modification is found at Ala-2. Ser-5 bears the Phosphoserine; by TRPM7 mark. Gln-19 is covalently cross-linked (Isoglutamyl lysine isopeptide (Gln-Lys) (interchain with K-?)). Phosphotyrosine is present on Tyr-21. The residue at position 27 (Ser-27) is a Phosphoserine; by PKC. Phosphoserine occurs at positions 34 and 37. Annexin repeat units follow at residues 42–113 (FNVS…AMLK), 114–185 (TPAQ…ALAK), 197–269 (DLAD…TIVK), and 273–344 (STPA…ALCG). N6-acetyllysine is present on Lys-58. Ca(2+) contacts are provided by Gly-59, Val-60, Glu-62, Arg-97, Leu-100, Glu-105, Met-127, Gly-129, Gly-131, Thr-132, and Glu-134. Thr-136 carries the post-translational modification Phosphothreonine. Ca(2+) contacts are provided by Asp-171, Gly-210, and Arg-213. Lys-214 participates in a covalent cross-link: Glycyl lysine isopeptide (Lys-Gly) (interchain with G-Cter in SUMO1); alternate. Residue Lys-214 forms a Glycyl lysine isopeptide (Lys-Gly) (interchain with G-Cter in SUMO2); alternate linkage. 4 residues coordinate Ca(2+): Gly-215, Asp-253, Glu-255, and Leu-256. Lys-257 is covalently cross-linked (Glycyl lysine isopeptide (Lys-Gly) (interchain with G-Cter in SUMO1)). Glu-261, Met-286, Gly-288, and Gly-290 together coordinate Ca(2+). The residue at position 312 (Lys-312) is an N6-acetyllysine. Cys-324 and Cys-343 are oxidised to a cystine. Residues Leu-328, Glu-330, and Thr-331 each contribute to the Ca(2+) site. Lys-332 participates in a covalent cross-link: Glycyl lysine isopeptide (Lys-Gly) (interchain with G-Cter in SUMO1). Glu-336 lines the Ca(2+) pocket.

This sequence belongs to the annexin family. In terms of assembly, homodimer; non-covalently linked. Homodimer; linked by transglutamylation. Homodimers linked by transglutamylation are observed in placenta, but not in other tissues. Interacts with S100A11. Heterotetramer, formed by two molecules each of S100A11 and ANXA1. Interacts with DYSF. Interacts with EGFR. Post-translationally, phosphorylated by protein kinase C, EGFR and TRPM7. Phosphorylated in response to EGF treatment. In terms of processing, sumoylated. Proteolytically cleaved by cathepsin CTSG to release the active N-terminal peptide Ac2-26. Detected in lung. Detected at the apical membrane of airway epithelial cells. Detected in intestinal epithelial cells. Detected in skeletal muscle. Detected in prostate. Detected in thymus (at protein level). Detected in stomach, lung, spleen, ovary and uterus, and at lower levels in kidney, thymus and heart.

It is found in the nucleus. The protein resides in the cytoplasm. The protein localises to the cell projection. Its subcellular location is the cilium. It localises to the basolateral cell membrane. It is found in the lateral cell membrane. The protein resides in the cell membrane. The protein localises to the apical cell membrane. Its subcellular location is the membrane. It localises to the early endosome. It is found in the cytoplasmic vesicle membrane. The protein resides in the endosome membrane. The protein localises to the secreted. Its subcellular location is the extracellular space. It localises to the extracellular exosome. It is found in the cytoplasmic vesicle. The protein resides in the secretory vesicle lumen. The protein localises to the phagocytic cup. Plays important roles in the innate immune response as effector of glucocorticoid-mediated responses and regulator of the inflammatory process. Has anti-inflammatory activity. Plays a role in glucocorticoid-mediated down-regulation of the early phase of the inflammatory response. Contributes to the adaptive immune response by enhancing signaling cascades that are triggered by T-cell activation, regulates differentiation and proliferation of activated T-cells. Promotes the differentiation of T-cells into Th1 cells and negatively regulates differentiation into Th2 cells. Has no effect on unstimulated T-cells. Negatively regulates hormone exocytosis via activation of the formyl peptide receptors and reorganization of the actin cytoskeleton. Has high affinity for Ca(2+) and can bind up to eight Ca(2+) ions. Displays Ca(2+)-dependent binding to phospholipid membranes. Plays a role in the formation of phagocytic cups and phagosomes. Plays a role in phagocytosis by mediating the Ca(2+)-dependent interaction between phagosomes and the actin cytoskeleton. In terms of biological role, functions at least in part by activating the formyl peptide receptors and downstream signaling cascades. Promotes chemotaxis of granulocytes and monocytes via activation of the formyl peptide receptors. Promotes rearrangement of the actin cytoskeleton, cell polarization and cell migration. Promotes resolution of inflammation and wound healing. Acts via neutrophil N-formyl peptide receptors to enhance the release of CXCL2. The chain is Annexin A1 (Anxa1) from Mus musculus (Mouse).